A 365-amino-acid chain; its full sequence is Fucose-specific lectin (365 aa).

The first 21 residues, 1–21 (MKLLHFTILLQVSLFPASSLA), serve as a signal peptide directing secretion. Repeat copies occupy residues 22 to 79 (QAGG…NDTI), 80 to 141 (AKAR…NQYN), 142 to 206 (FQVA…RLAN), 207 to 261 (FGPA…VRTA), 262 to 309 (KPRT…DGAF), and 310 to 365 (EHSA…IPPA). Residues 22–365 (QAGGNNTEVQ…RRGILAIPPA (344 aa)) form a 6 X approximate tandem repeats region. A glycan (N-linked (GlcNAc...) asparagine) is linked at N26. 3 residues coordinate beta-L-fucose: R51, E63, and W70. Residues N76 and N85 are each glycosylated (N-linked (GlcNAc...) asparagine). Residue R111 participates in beta-L-fucose binding. N-linked (GlcNAc...) asparagine glycosylation occurs at N118. Positions 123, 132, 164, 176, 201, and 231 each coordinate beta-L-fucose. A glycan (N-linked (GlcNAc...) asparagine) is linked at N248. Residues R283, R333, and E347 each coordinate beta-L-fucose.

Belongs to the fungal fucose-specific lectin family. As to quaternary structure, homodimer.

It localises to the secreted. In terms of biological role, probable L-fucose-binding lectin. The protein is Fucose-specific lectin of Arthroderma benhamiae (strain ATCC MYA-4681 / CBS 112371) (Trichophyton mentagrophytes).